Here is a 366-residue protein sequence, read N- to C-terminus: 1-deoxy-D-xylulose 5-phosphate reductoisomerase (366 aa).

Positions 7, 8, 9, 10, 31, 33, and 111 each coordinate NADPH. K112 contacts 1-deoxy-D-xylulose 5-phosphate. E113 is a binding site for NADPH. D131 serves as a coordination point for Mn(2+). Residues S132, E133, S162, and H185 each contribute to the 1-deoxy-D-xylulose 5-phosphate site. E133 serves as a coordination point for Mn(2+). G191 lines the NADPH pocket. Positions 198, 203, 204, and 207 each coordinate 1-deoxy-D-xylulose 5-phosphate. Position 207 (E207) interacts with Mn(2+).

It belongs to the DXR family. Mg(2+) serves as cofactor. Requires Mn(2+) as cofactor.

The catalysed reaction is 2-C-methyl-D-erythritol 4-phosphate + NADP(+) = 1-deoxy-D-xylulose 5-phosphate + NADPH + H(+). It participates in isoprenoid biosynthesis; isopentenyl diphosphate biosynthesis via DXP pathway; isopentenyl diphosphate from 1-deoxy-D-xylulose 5-phosphate: step 1/6. Functionally, catalyzes the NADPH-dependent rearrangement and reduction of 1-deoxy-D-xylulose-5-phosphate (DXP) to 2-C-methyl-D-erythritol 4-phosphate (MEP). The chain is 1-deoxy-D-xylulose 5-phosphate reductoisomerase from Nautilia profundicola (strain ATCC BAA-1463 / DSM 18972 / AmH).